Here is a 509-residue protein sequence, read N- to C-terminus: Scavenger receptor class B member 1 (509 aa).

The Cytoplasmic portion of the chain corresponds to 1–11; the sequence is MGVSSRARWVA. The helical transmembrane segment at 12 to 32 threads the bilayer; that stretch reads LGLGVLGLLCAALGVIMILMV. Residues 33-440 are Extracellular-facing; the sequence is PSLIKQQVLK…YTQLVLMPQV (408 aa). Residues Asn-102, Asn-108, Asn-116, Asn-173, Asn-212, Asn-227, Asn-255, Asn-310, Asn-330, and Asn-383 are each glycosylated (N-linked (GlcNAc...) asparagine). An intrachain disulfide couples Cys-251 to Cys-384. A helical membrane pass occupies residues 441 to 461; the sequence is LHYAQYVLLGLGGLLLLVPII. Residues 462–509 lie on the Cytoplasmic side of the membrane; that stretch reads YQLRSQEKCFLFWSGSKKGSQDKEAMQAYSESLMSPAAKGTVLQEAKL.

The protein belongs to the CD36 family. As to quaternary structure, the C-terminal region binds to PDZK1. In terms of processing, N-glycosylated. Post-translationally, the six cysteines of the extracellular domain are all involved in intramolecular disulfide bonds.

It localises to the cell membrane. It is found in the membrane. The protein localises to the caveola. Functionally, receptor for different ligands such as phospholipids, cholesterol ester, lipoproteins, phosphatidylserine and apoptotic cells. Receptor for HDL, mediating selective uptake of cholesteryl ether and HDL-dependent cholesterol efflux. Also facilitates the flux of free and esterified cholesterol between the cell surface and apoB-containing lipoproteins and modified lipoproteins, although less efficiently than HDL. May be involved in the phagocytosis of apoptotic cells, via its phosphatidylserine binding activity. The chain is Scavenger receptor class B member 1 (Scarb1) from Rattus norvegicus (Rat).